We begin with the raw amino-acid sequence, 101 residues long: MSDEGYRELVESKSAPTTPGPWSPDRERWKRHEAAWKQHCSWSHGLWCHCHDWTRHLKKETRECGSGTESGEDPAVSFDLVDDAAMLAAAGDAEPGAAGGG.

Residues 1-11 (MSDEGYRELVE) show a composition bias toward basic and acidic residues. The tract at residues 1 to 26 (MSDEGYRELVESKSAPTTPGPWSPDR) is disordered.

This is an uncharacterized protein from Torque teno canis virus (isolate Cf-TTV10).